Consider the following 268-residue polypeptide: Ribosomal RNA large subunit methyltransferase E (268 aa).

The interval 1–60 (MKPPRSRSGSSKDTGPKRIPGKALKSASNPGENDATLDSATARTARNKTVSLRTARGRTT) is disordered. Polar residues predominate over residues 26 to 52 (SASNPGENDATLDSATARTARNKTVSL). S-adenosyl-L-methionine is bound by residues Gly115, Trp117, Asp133, Asp149, and Asp173. Lys213 acts as the Proton acceptor in catalysis.

This sequence belongs to the class I-like SAM-binding methyltransferase superfamily. RNA methyltransferase RlmE family.

The protein localises to the cytoplasm. It catalyses the reaction uridine(2552) in 23S rRNA + S-adenosyl-L-methionine = 2'-O-methyluridine(2552) in 23S rRNA + S-adenosyl-L-homocysteine + H(+). Functionally, specifically methylates the uridine in position 2552 of 23S rRNA at the 2'-O position of the ribose in the fully assembled 50S ribosomal subunit. The protein is Ribosomal RNA large subunit methyltransferase E of Gluconobacter oxydans (strain 621H) (Gluconobacter suboxydans).